The following is a 328-amino-acid chain: tRNA(Ile)-lysidine synthase (328 aa).

35-40 contributes to the ATP binding site; that stretch reads SGGADS.

The protein belongs to the tRNA(Ile)-lysidine synthase family.

It is found in the cytoplasm. It catalyses the reaction cytidine(34) in tRNA(Ile2) + L-lysine + ATP = lysidine(34) in tRNA(Ile2) + AMP + diphosphate + H(+). Functionally, ligates lysine onto the cytidine present at position 34 of the AUA codon-specific tRNA(Ile) that contains the anticodon CAU, in an ATP-dependent manner. Cytidine is converted to lysidine, thus changing the amino acid specificity of the tRNA from methionine to isoleucine. This Polaromonas naphthalenivorans (strain CJ2) protein is tRNA(Ile)-lysidine synthase.